A 337-amino-acid chain; its full sequence is N-acetyl-gamma-glutamyl-phosphate reductase (337 aa).

Residue C155 is part of the active site.

Belongs to the NAGSA dehydrogenase family. Type 1 subfamily.

The protein localises to the cytoplasm. It catalyses the reaction N-acetyl-L-glutamate 5-semialdehyde + phosphate + NADP(+) = N-acetyl-L-glutamyl 5-phosphate + NADPH + H(+). It participates in amino-acid biosynthesis; L-arginine biosynthesis; N(2)-acetyl-L-ornithine from L-glutamate: step 3/4. Its function is as follows. Catalyzes the NADPH-dependent reduction of N-acetyl-5-glutamyl phosphate to yield N-acetyl-L-glutamate 5-semialdehyde. The sequence is that of N-acetyl-gamma-glutamyl-phosphate reductase from Alteromonas mediterranea (strain DSM 17117 / CIP 110805 / LMG 28347 / Deep ecotype).